The sequence spans 199 residues: MNQSHFFAHLSRLKLISRWPLMRNVRTENVSEHSLQVAFVAHALAVIKNRKFEGNLNTERIALLAMYHDASEVLTGDMPTPIKYYNAQIAHEYKKIEKIAQQKLIEMLPEELQQDYRMLLDDSYTSEEERAIVKQADALCAYLKCLEELSAGNAEFTLAKARLEKTLQLRHSSEMDYFMTVFVPSFSLSLDEISQDSPL.

Substrate-binding positions include 18–19 and histidine 33; that span reads RW. The 113-residue stretch at 30–142 folds into the HD domain; that stretch reads VSEHSLQVAF…VKQADALCAY (113 aa). Residues histidine 33, histidine 68, and aspartate 69 each coordinate a divalent metal cation. Residues aspartate 69, 77–80, and aspartate 137 each bind substrate; that span reads DMPT. Residue aspartate 137 coordinates a divalent metal cation.

It belongs to the 5DNU family. In terms of assembly, homodimer. It depends on a divalent metal cation as a cofactor.

It is found in the cytoplasm. It carries out the reaction a 2'-deoxyribonucleoside 5'-phosphate + H2O = a 2'-deoxyribonucleoside + phosphate. Catalyzes the strictly specific dephosphorylation of 2'-deoxyribonucleoside 5'-monophosphates. The protein is 5'-deoxynucleotidase ECA3034 of Pectobacterium atrosepticum (strain SCRI 1043 / ATCC BAA-672) (Erwinia carotovora subsp. atroseptica).